The sequence spans 385 residues: ELAV-like protein 4 (385 aa).

The disordered stretch occupies residues 12–48 (TMEPQVSNGPTSNTSNGPSSNNRNCPSPMQTGATTDD). Residues 18 to 33 (SNGPTSNTSNGPSSNN) are compositionally biased toward low complexity. Residues 34–48 (RNCPSPMQTGATTDD) are compositionally biased toward polar residues. Residue Ser-38 is modified to Phosphoserine. 2 RRM domains span residues 51-129 (TNLI…YARP) and 137-217 (ANLY…FANN). A Phosphoserine modification is found at Ser-233. Arg-248 bears the Asymmetric dimethylarginine; by CARM1; alternate mark. An Omega-N-methylarginine; by CARM1; alternate modification is found at Arg-248. The region spanning 302–380 (WCIFVYNLSP…RVLQVSFKTN (79 aa)) is the RRM 3 domain.

This sequence belongs to the RRM elav family. Component of a TAU mRNP complex, at least composed of IGF2BP1, ELAVL4 and G3BP. Associates with the EIF4F cap-binding complex, composed of EIF4G, EIF4A, EIF4E and PABP. Within the EIF4F cap-binding complex, interacts with EIF4A. Interacts with SMN (via Tudor domain) in an RNA-independent manner; the interaction is required for localization of ELAVL4 to RNA granules. Interacts with MAP1 light chain LC1 (via C-terminus); the interaction contributes to the association of ELAVL4 with microtubules. Interacts with MAP1 light chain LC2. Methylated by CARM1, which leads to reduced RNA-binding activity and enhanced interaction with SMN. Methylation at Arg-248 by CARM1 weakens protective binding to the 3'UTR of CDKN1A mRNA and down-regulates CDKN1A protein expression, thereby maintaining cells in a proliferative state. Methylation is inhibited by NGF, which facilitates neurite outgrowth. In terms of tissue distribution, expressed in pancreatic beta cells (at protein level). Expressed in the brain.

The protein localises to the cytoplasm. The protein resides in the perikaryon. Its subcellular location is the cell projection. It localises to the dendrite. It is found in the axon. The protein localises to the growth cone. Its function is as follows. RNA-binding protein that is involved in the post-transcriptional regulation of mRNAs. Plays a role in the regulation of mRNA stability, alternative splicing and translation. Binds to AU-rich element (ARE) sequences in the 3' untranslated region (UTR) of target mRNAs, including GAP43, VEGF, FOS, CDKN1A and ACHE mRNA. Many of the target mRNAs are coding for RNA-binding proteins, transcription factors and proteins involved in RNA processing and/or neuronal development and function. By binding to the mRNA 3'UTR, decreases mRNA deadenylation and thereby contributes to the stabilization of mRNA molecules and their protection from decay. Also binds to the polyadenylated (poly(A)) tail in the 3'UTR of mRNA, thereby increasing its affinity for mRNA binding. Mainly plays a role in neuron-specific RNA processing by stabilization of mRNAs such as GAP43, ACHE and mRNAs of other neuronal proteins, thereby contributing to the differentiation of neural progenitor cells, nervous system development, learning and memory mechanisms. Involved in the negative regulation of the proliferative activity of neuronal stem cells and in the positive regulation of neuronal differentiation of neural progenitor cells. Promotes neuronal differentiation of neural stem/progenitor cells in the adult subventricular zone of the hippocampus by binding to and stabilizing SATB1 mRNA. Binds and stabilizes MSI1 mRNA in neural stem cells. Exhibits increased binding to ACHE mRNA during neuronal differentiation, thereby stabilizing ACHE mRNA and enhancing its expression. Protects CDKN1A mRNA from decay by binding to its 3'-UTR. May bind to APP and BACE1 mRNAS and the BACE1AS lncRNA and enhance their stabilization. Plays a role in neurite outgrowth and in the establishment and maturation of dendritic arbors, thereby contributing to neocortical and hippocampal circuitry function. Stabilizes GAP43 mRNA and protects it from decay during postembryonic development in the brain. By promoting the stabilization of GAP43 mRNA, plays a role in NGF-mediated neurite outgrowth. Binds to BDNF long 3'UTR mRNA, thereby leading to its stabilization and increased dendritic translation after activation of PKC. By increasing translation of BDNF after nerve injury, may contribute to nerve regeneration. Acts as a stabilizing factor by binding to the 3'UTR of NOVA1 mRNA, thereby increasing its translation and enhancing its functional activity in neuron-specific splicing. Stimulates translation of mRNA in a poly(A)- and cap-dependent manner, possibly by associating with the EIF4F cap-binding complex. May also negatively regulate translation by binding to the 5'UTR of Ins2 mRNA, thereby repressing its translation. Upon glucose stimulation, Ins2 mRNA is released from ELAVL4 and translational inhibition is abolished. Also plays a role in the regulation of alternative splicing. May regulate alternative splicing of CALCA pre-mRNA into Calcitonin and Calcitonin gene-related peptide 1 (CGRP) by competing with splicing regulator TIAR for binding to U-rich intronic sequences of CALCA pre-mRNA. This chain is ELAV-like protein 4 (ELAVL4), found in Homo sapiens (Human).